The sequence spans 129 residues: Lysozyme C (129 aa).

One can recognise a C-type lysozyme domain in the interval 1 to 129 (KVYGRCELAA…VQAWIRGCRL (129 aa)). 4 disulfides stabilise this stretch: C6–C127, C30–C115, C64–C80, and C76–C94. Active-site residues include E35 and D52.

The protein belongs to the glycosyl hydrolase 22 family. As to quaternary structure, monomer.

Its subcellular location is the secreted. The catalysed reaction is Hydrolysis of (1-&gt;4)-beta-linkages between N-acetylmuramic acid and N-acetyl-D-glucosamine residues in a peptidoglycan and between N-acetyl-D-glucosamine residues in chitodextrins.. Lysozymes have primarily a bacteriolytic function; those in tissues and body fluids are associated with the monocyte-macrophage system and enhance the activity of immunoagents. In Tragopan satyra (Satyr tragopan), this protein is Lysozyme C (LYZ).